A 346-amino-acid chain; its full sequence is N-acetyl-gamma-glutamyl-phosphate reductase (346 aa).

Cysteine 150 is an active-site residue.

Belongs to the NAGSA dehydrogenase family. Type 1 subfamily.

Its subcellular location is the cytoplasm. It catalyses the reaction N-acetyl-L-glutamate 5-semialdehyde + phosphate + NADP(+) = N-acetyl-L-glutamyl 5-phosphate + NADPH + H(+). The protein operates within amino-acid biosynthesis; L-arginine biosynthesis; N(2)-acetyl-L-ornithine from L-glutamate: step 3/4. Its function is as follows. Catalyzes the NADPH-dependent reduction of N-acetyl-5-glutamyl phosphate to yield N-acetyl-L-glutamate 5-semialdehyde. The sequence is that of N-acetyl-gamma-glutamyl-phosphate reductase from Acetivibrio thermocellus (strain ATCC 27405 / DSM 1237 / JCM 9322 / NBRC 103400 / NCIMB 10682 / NRRL B-4536 / VPI 7372) (Clostridium thermocellum).